Reading from the N-terminus, the 331-residue chain is Gamma-parvin (331 aa).

Met1 is modified (N-acetylmethionine). Positions 18 to 38 (QPTEEELPRGGKKKYLSPNSK) are disordered. 2 Calponin-homology (CH) domains span residues 44–151 (EELQ…KRFQ) and 210–317 (HAVQ…QKHS).

The protein belongs to the parvin family. As to quaternary structure, interacts with ILK; the interaction promotes the establishment of cell polarity required for leukocyte migration. Interacts with ARHGEF6; the guanine nucleotide exchange factor activity of ARHGEF6 is essential for the PARVG-induced enhancement of cell spreading. In terms of tissue distribution, expressed strongly in spleen and testis, moderately in lung and weakly in brain and heart.

It is found in the cell junction. It localises to the focal adhesion. The protein localises to the cell membrane. The protein resides in the cytoplasm. Its subcellular location is the cytoskeleton. In terms of biological role, plays a role with ILK in promoting the cell adhesion and spreading of leukocytes. The polypeptide is Gamma-parvin (Parvg) (Mus musculus (Mouse)).